The primary structure comprises 615 residues: ATP-dependent RNA helicase mrh4, mitochondrial (615 aa).

The transit peptide at 1 to 37 (MLRPKAGKCLLCSFRAAQKPVSQKWPSRALSMRTRLP) directs the protein to the mitochondrion. The interval 21–108 (VSQKWPSRAL…HRDRDDKKDR (88 aa)) is disordered. Basic and acidic residues predominate over residues 90–108 (QERRTSRLDHRDRDDKKDR). The short motif at 138–171 (QSFEQFALLDSVKQAIFQQALPELKEHVPTPVQR) is the Q motif element. The region spanning 184–395 (RRPKSEMEQY…RKRFPDINRL (212 aa)) is the Helicase ATP-binding domain. Position 197–204 (197–204 (AETGSGKT)) interacts with ATP. Residues 342–345 (DEAD) carry the DEAD box motif. Residues 444 to 615 (PVKGLMDVKR…EGMFEGKALI (172 aa)) enclose the Helicase C-terminal domain.

Belongs to the DEAD box helicase family. MRH4 subfamily.

Its subcellular location is the mitochondrion. The catalysed reaction is ATP + H2O = ADP + phosphate + H(+). Functionally, ATP-binding RNA helicase involved in mitochondrial RNA metabolism. Required for maintenance of mitochondrial DNA. The protein is ATP-dependent RNA helicase mrh4, mitochondrial (mrh4) of Sclerotinia sclerotiorum (strain ATCC 18683 / 1980 / Ss-1) (White mold).